Reading from the N-terminus, the 107-residue chain is MLLATSGRLDGFKVTKYLGIVTGEAIMGTNFIRDLLASISDIIGGRSGAYEQQLEEARNIVLNEMSERAKRLGANAVIGISLDYESVGQSMLMVVATGTAVYIEPEM.

The protein belongs to the UPF0145 family.

This Carboxydothermus hydrogenoformans (strain ATCC BAA-161 / DSM 6008 / Z-2901) protein is UPF0145 protein CHY_0465.